The sequence spans 244 residues: Flavin-dependent thymidylate synthase (244 aa).

One can recognise a ThyX domain in the interval 17 to 239 (ITVELVKHSA…PETHAAFEKQ (223 aa)). FAD is bound by residues Ser68, 91–93 (RHR), and Glu99. DUMP is bound by residues 88 to 91 (EFMR), 99 to 103 (EESGR), and Arg171. Positions 91 to 101 (RHRIASYNEES) match the ThyX motif motif. Residues 187–189 (NAR) and Asn193 contribute to the FAD site. Position 198 (Arg198) interacts with dUMP. The active-site Involved in ionization of N3 of dUMP, leading to its activation is Arg198.

It belongs to the thymidylate synthase ThyX family. Homotetramer. The cofactor is FAD.

It catalyses the reaction dUMP + (6R)-5,10-methylene-5,6,7,8-tetrahydrofolate + NADPH + H(+) = dTMP + (6S)-5,6,7,8-tetrahydrofolate + NADP(+). The protein operates within pyrimidine metabolism; dTTP biosynthesis. Functionally, catalyzes the reductive methylation of 2'-deoxyuridine-5'-monophosphate (dUMP) to 2'-deoxythymidine-5'-monophosphate (dTMP) while utilizing 5,10-methylenetetrahydrofolate (mTHF) as the methyl donor, and NADPH and FADH(2) as the reductant. The chain is Flavin-dependent thymidylate synthase from Tropheryma whipplei (strain Twist) (Whipple's bacillus).